Reading from the N-terminus, the 1954-residue chain is Chromodomain-helicase-DNA-binding protein 5 (1954 aa).

Disordered regions lie at residues 1–134 and 225–338; these read MRGP…PKSS and PLAV…GDGY. Acidic residues-rich tracts occupy residues 17-37 and 72-90; these read EEME…EAFD and NDEL…ESEG. Basic residues predominate over residues 96–115; sequence NKKKKKKLKDKKEKKAKRKK. Residues 227 to 237 show a composition bias toward pro residues; that stretch reads AVSPPQVPQPV. Over residues 251 to 272 the composition is skewed to basic residues; sequence GVRKKIKGSKDGKKKGKGKKTA. A compositionally biased stretch (acidic residues) spans 291-301; the sequence is SEEDEREESDF. Over residues 321–330 the composition is skewed to basic residues; that stretch reads KKSKRRRKKK. 2 consecutive PHD-type zinc fingers follow at residues 343 to 390 and 416 to 463; these read QDYC…CEKE and MEFC…CTCP. The tract at residues 343 to 653 is histone-binding; sequence QDYCEVCQQG…HRELMLGEDT (311 aa). The Chromo 1 domain occupies 497 to 554; the sequence is LPPPKPLEGIPEREFFVKWAGLSYWHCSWVKELQLELYHTVMYRNYQRKNDMDEPPPF. Residues 549–571 form a disordered region; the sequence is DEPPPFDYGSGDEDGKSEKRKNK. The segment covering 561–571 has biased composition (basic and acidic residues); the sequence is EDGKSEKRKNK. The Chromo 2 domain occupies 592–653; sequence MMIHRILNHS…HRELMLGEDT (62 aa). In terms of domain architecture, Helicase ATP-binding spans 712–896; the sequence is RFSWAQGTDT…FHLLNFLTPE (185 aa). 725-732 is an ATP binding site; that stretch reads DEMGLGKT. The DEAH box signature appears at 847–850; sequence DEAH. Positions 1028–1193 constitute a Helicase C-terminal domain; it reads LLQKMLKKLR…MTKQELDDIL (166 aa). Disordered stretches follow at residues 1209–1253, 1351–1411, 1524–1564, 1597–1640, and 1658–1696; these read MSQG…EDSS, YNDA…LPPL, YSTP…APLG, AALD…REEV, and SRGD…KKED. Composition is skewed to acidic residues over residues 1355-1366 and 1376-1385; these read SQEDQEWQDELS and SEDEDEDFEE. Q1390 bears the N5-methylglutamine mark. The residue at position 1554 (S1554) is a Phosphoserine. Over residues 1554 to 1564 the composition is skewed to low complexity; sequence SPAHLLPAPLG. 2 stretches are compositionally biased toward basic and acidic residues: residues 1600-1627 and 1658-1678; these read DRVE…ETEK and SRGD…KEPI.

This sequence belongs to the SNF2/RAD54 helicase family. As to quaternary structure, component of the nucleosome remodeling and deacetylase (NuRD) repressor complex, composed of core proteins MTA1, MTA2, MTA3, RBBP4, RBBP7, HDAC1, HDAC2, MBD2, MBD3, and peripherally associated proteins CDK2AP1, CDK2AP2, GATAD2A, GATAD2B, CHD3, CHD4 and CHD5. The exact stoichiometry of the NuRD complex is unknown, and some subunits such as MBD2 and MBD3, GATAD2A and GATAD2B, and CHD3, CHD4 and CHD5 define mutually exclusive NuRD complexes. Interacts with HDAC2. Methylated at Gln-1390 by N6AMT1. Preferentially expressed in total brain, fetal brain, and cerebellum. It is also moderately expressed in the adrenal gland and detected in testis.

Its subcellular location is the nucleus. It localises to the chromosome. It catalyses the reaction ATP + H2O = ADP + phosphate + H(+). Its function is as follows. ATP-dependent chromatin-remodeling factor that binds DNA through histones and regulates gene transcription. May specifically recognize and bind trimethylated 'Lys-27' (H3K27me3) and non-methylated 'Lys-4' of histone H3. Acts as a component of the histone deacetylase NuRD complex which participates in the remodeling of chromatin. Plays a role in the development of the nervous system by activating the expression of genes promoting neuron terminal differentiation. In parallel, it may also positively regulate the trimethylation of histone H3 at 'Lys-27' thereby specifically repressing genes that promote the differentiation into non-neuronal cell lineages. Regulates the expression of genes involved in cell proliferation and differentiation. Downstream activated genes may include CDKN2A that positively regulates the p53/TP53 pathway, which in turn, prevents cell proliferation. In spermatogenesis, it probably regulates histone hyperacetylation and the replacement of histones by transition proteins in chromatin, a crucial step in the condensation of spermatid chromatin and the production of functional spermatozoa. In Homo sapiens (Human), this protein is Chromodomain-helicase-DNA-binding protein 5.